Consider the following 77-residue polypeptide: Ribonuclease P protein component 1 (77 aa).

Belongs to the eukaryotic/archaeal RNase P protein component 1 family. Consists of a catalytic RNA component and at least 4-5 protein subunits.

Its subcellular location is the cytoplasm. The enzyme catalyses Endonucleolytic cleavage of RNA, removing 5'-extranucleotides from tRNA precursor.. Part of ribonuclease P, a protein complex that generates mature tRNA molecules by cleaving their 5'-ends. The polypeptide is Ribonuclease P protein component 1 (Sulfurisphaera tokodaii (strain DSM 16993 / JCM 10545 / NBRC 100140 / 7) (Sulfolobus tokodaii)).